The chain runs to 317 residues: Melanocyte-stimulating hormone receptor (317 aa).

Residues 1–37 (MPVQGSQRRLLGSLNSTPTATPKLGLAANQTGAQCLE) lie on the Extracellular side of the membrane. An N-linked (GlcNAc...) asparagine glycan is attached at Asn-29. The chain crosses the membrane as a helical span at residues 38 to 63 (VSIPDGLFLSLGLVSLVENVLVVAAI). The Cytoplasmic segment spans residues 64 to 72 (ARNRNLHSP). Residues 73–93 (MYCFICCLALSDLLVSGSNML) form a helical membrane-spanning segment. Residues 94 to 118 (ETAVILLLEAGALAARAAVVQQLDN) are Extracellular-facing. Residues 119 to 140 (VIDVITCSSMLSSLCFLGAIAM) traverse the membrane as a helical segment. The Cytoplasmic portion of the chain corresponds to 141 to 163 (DRYISIFYALRYHSIVTLPRARG). Residues 164–183 (VVAAIWVASILFSTLFIAYY) traverse the membrane as a helical segment. Over 184–191 (DHVAVLLC) the chain is Extracellular. Residues 192–211 (LVVFFLAMLVLMAVLYVHML) traverse the membrane as a helical segment. Over 212–240 (ARACQHAQGIAQLHKRQRPAHQGVGLKGA) the chain is Cytoplasmic. Residues 241 to 266 (ATLTILLGIFFLCWGPFFLHLTLIVL) form a helical membrane-spanning segment. Residues 267–279 (CPQHPTCSCIFKN) are Extracellular-facing. Residues 280-300 (FNLFLALIICNAIIDPLIYAF) form a helical membrane-spanning segment. Over 301–317 (RSQELRRTLKKVLLCSW) the chain is Cytoplasmic. Cys-315 is lipidated: S-palmitoyl cysteine.

This sequence belongs to the G-protein coupled receptor 1 family. As to quaternary structure, interacts with MGRN1, but does not undergo MGRN1-mediated ubiquitination; this interaction competes with GNAS-binding and thus inhibits agonist-induced cAMP production. Interacts with OPN3; the interaction results in a decrease in MC1R-mediated cAMP signaling and ultimately a decrease in melanin production in melanocytes.

Its subcellular location is the cell membrane. Its function is as follows. Receptor for MSH (alpha, beta and gamma) and ACTH. The activity of this receptor is mediated by G proteins which activate adenylate cyclase. Mediates melanogenesis, the production of eumelanin (black/brown) and phaeomelanin (red/yellow), via regulation of cAMP signaling in melanocytes. This is Melanocyte-stimulating hormone receptor (MC1R) from Presbytis comata (Grizzled leaf monkey).